The following is a 607-amino-acid chain: Guanine nucleotide-binding protein-like 1 (607 aa).

The span at 1-14 (MPRKKPFSVKQKKK) shows a compositional bias: basic residues. Residues 1-81 (MPRKKPFSVK…GPRGYDPNRY (81 aa)) are disordered. Positions 15-26 (QLQDKRERKRGL) are enriched in basic and acidic residues. S32, S33, and S34 each carry phosphoserine. A phosphothreonine mark is found at T48 and T50. A phosphoserine mark is found at S51 and S68. The region spanning 178-418 (WRQLWRVLEM…LCDCPGLIFP (241 aa)) is the CP-type G domain. A GTP-binding site is contributed by 225-228 (NKVD). S324 is subject to Phosphoserine. GTP contacts are provided by residues 367 to 374 (GFPNVGKS) and 411 to 415 (DCPGL). Positions 547-607 (GPAGDEEEEE…PYALLGEDEC (61 aa)) are disordered. The span at 550-584 (GDEEEEEEEELSSSCEEEGEEDRDADEEGEGDEDT) shows a compositional bias: acidic residues. A phosphoserine mark is found at S561, S562, and S563.

It belongs to the TRAFAC class YlqF/YawG GTPase family.

Its function is as follows. Possible regulatory or functional link with the histocompatibility cluster. The sequence is that of Guanine nucleotide-binding protein-like 1 (GNL1) from Macaca fascicularis (Crab-eating macaque).